A 445-amino-acid polypeptide reads, in one-letter code: GTPase Der (445 aa).

EngA-type G domains follow at residues 3–167 (PVIA…YAGQ) and 180–353 (IKIA…AAAM). Residues 9–16 (GRPNVGKS), 56–60 (DTGGF), 119–122 (NKAE), 186–193 (GRPNVGKS), 233–237 (DTAGL), and 298–301 (NKWD) contribute to the GTP site. The region spanning 354 to 438 (AKLPTPKLTR…PLRIEFRSSN (85 aa)) is the KH-like domain.

This sequence belongs to the TRAFAC class TrmE-Era-EngA-EngB-Septin-like GTPase superfamily. EngA (Der) GTPase family. In terms of assembly, associates with the 50S ribosomal subunit.

In terms of biological role, GTPase that plays an essential role in the late steps of ribosome biogenesis. This is GTPase Der from Burkholderia cenocepacia (strain HI2424).